We begin with the raw amino-acid sequence, 148 residues long: 3-dehydroquinate dehydratase (148 aa).

Residue tyrosine 22 is the Proton acceptor of the active site. 3 residues coordinate substrate: asparagine 73, histidine 79, and aspartate 86. Catalysis depends on histidine 99, which acts as the Proton donor. Residues leucine 100–serine 101 and arginine 110 each bind substrate.

It belongs to the type-II 3-dehydroquinase family. As to quaternary structure, homododecamer.

It catalyses the reaction 3-dehydroquinate = 3-dehydroshikimate + H2O. Its pathway is metabolic intermediate biosynthesis; chorismate biosynthesis; chorismate from D-erythrose 4-phosphate and phosphoenolpyruvate: step 3/7. In terms of biological role, catalyzes a trans-dehydration via an enolate intermediate. The chain is 3-dehydroquinate dehydratase from Prochlorococcus marinus (strain MIT 9211).